The primary structure comprises 143 residues: Transcriptional regulator MraZ (143 aa).

2 consecutive SpoVT-AbrB domains span residues 5-47 (THTP…PRAE) and 76-119 (TDEQ…DAQA).

Belongs to the MraZ family. In terms of assembly, forms oligomers.

Its subcellular location is the cytoplasm. It is found in the nucleoid. This chain is Transcriptional regulator MraZ, found in Mycobacterium leprae (strain Br4923).